A 65-amino-acid chain; its full sequence is Large ribosomal subunit protein uL29 (65 aa).

This sequence belongs to the universal ribosomal protein uL29 family.

The protein is Large ribosomal subunit protein uL29 of Hyphomonas neptunium (strain ATCC 15444).